The sequence spans 653 residues: DUF21 domain-containing protein At1g55930, chloroplastic (653 aa).

The transit peptide at 1–72 (MELDLSVLGR…DFSHRCQFVV (72 aa)) directs the protein to the chloroplast. 5 consecutive transmembrane segments (helical) span residues 103 to 123 (GIVL…KVLA), 157 to 177 (GLIL…ETSI), 208 to 228 (FLTT…ALVT), 234 to 254 (IFGE…ILLL), and 280 to 300 (WLSL…MGIL). Residues 149 to 335 (VLKVLREQGL…ELSGAIEEEE (187 aa)) form the CNNM transmembrane domain. 2 CBS domains span residues 354–415 (MTPL…LLES) and 421–479 (MAHK…IFDE).

The protein resides in the plastid. It localises to the chloroplast membrane. This is DUF21 domain-containing protein At1g55930, chloroplastic (CBSDUFCH2) from Arabidopsis thaliana (Mouse-ear cress).